Here is a 416-residue protein sequence, read N- to C-terminus: Phakinin (416 aa).

The disordered stretch occupies residues 1-48 (MSERRVAMDLPSGSNASMPLQRHRVSSLRGTRSPSSLDSPPASRTSAV). N-acetylserine is present on serine 2. A head region spans residues 2 to 115 (SERRVAMDLP…HATAEDLGGC (114 aa)). 4 positions are modified to phosphoserine: serine 27, serine 33, serine 36, and serine 91. A compositionally biased stretch (polar residues) spans 28–48 (LRGTRSPSSLDSPPASRTSAV). One can recognise an IF rod domain in the interval 105 to 416 (NHATAEDLGG…HALLDREESN (312 aa)). Coiled coils occupy residues 199 to 240 (FRKA…SLSR) and 314 to 391 (LAAA…ERAH). Residues 397 to 416 (GQLQKDVASYHALLDREESN) form a tail region.

It belongs to the intermediate filament family. Part of a complex required for lens intermediate filament formation composed of BFSP1, BFSP2, and CRYAA. Found in a complex composed of PPL (via C-terminal linker domain), BFSP1 and BFSP2 in the retinal lens. Within the complex interacts with PPL (via C-terminal linker domain) and with BFSP1. Identified in a complex that contains VIM, EZR, AHNAK, BFSP1, BFSP2, ANK2, PLEC, PRX and spectrin. Interacts with LGSN. Interacts with VIM. In terms of tissue distribution, expressed in the deep and shallow cortices of the retina lens (at protein level).

Its subcellular location is the cell membrane. The protein localises to the cytoplasm. The protein resides in the cytoskeleton. It localises to the cell cortex. In terms of biological role, required for the correct formation of lens intermediate filaments as part of a complex composed of BFSP1, BFSP2 and CRYAA. Plays a role in maintenance of retinal lens optical clarity. The polypeptide is Phakinin (Rattus norvegicus (Rat)).